A 613-amino-acid chain; its full sequence is Myosin light chain kinase 2, skeletal/cardiac muscle (613 aa).

Positions 1–20 are enriched in polar residues; that stretch reads MTTENGAVELGSQSLSTEQT. The disordered stretch occupies residues 1–168; the sequence is MTTENGAVEL…RGSPAFLHSP (168 aa). Positions 32 to 55 are enriched in basic and acidic residues; the sequence is SEKEPSAPATEKDLSPPNAKKDPG. A compositionally biased stretch (pro residues) spans 56-66; it reads APDPKNNPDPP. Positions 67–83 are enriched in basic and acidic residues; sequence SLKKDPAKAPGPEKKGD. Gly residues predominate over residues 95-105; it reads SGEGDGGGGPA. Positions 106-122 are enriched in low complexity; the sequence is EGSEGPPAALPLPTATA. A compositionally biased stretch (basic and acidic residues) spans 145–158; the sequence is KAGKKAAECREAGR. Residues S161, S167, and S169 each carry the phosphoserine modification. Residues 219–240 form a disordered region; sequence EKKKEEAEKASGQAGQAKVQGD. In terms of domain architecture, Protein kinase spans 302–557; it reads MNSKEALGGG…AEQCLAHPWL (256 aa). ATP contacts are provided by residues 308 to 316 and K331; that span reads LGGGKFGAV. Residue D423 is the Proton acceptor of the active site. A Phosphothreonine modification is found at T462. Residues 591–603 form a calmodulin-binding region; it reads IAVSAANRFKKIS.

This sequence belongs to the protein kinase superfamily. CAMK Ser/Thr protein kinase family. May interact with centrin.

It is found in the cytoplasm. It catalyses the reaction L-seryl-[myosin light chain] + ATP = O-phospho-L-seryl-[myosin light chain] + ADP + H(+). The catalysed reaction is L-threonyl-[myosin light chain] + ATP = O-phospho-L-threonyl-[myosin light chain] + ADP + H(+). Functionally, implicated in the level of global muscle contraction and cardiac function. Phosphorylates a specific serine in the N-terminus of a myosin light chain. This is Myosin light chain kinase 2, skeletal/cardiac muscle (Mylk2) from Mus musculus (Mouse).